Reading from the N-terminus, the 101-residue chain is MAKKSMKARDVKRANLAEKFFAKRAELKAIVSDVNVSDEDRWNAVLKLQTLPRDSSPSRQRNRCRQTGRPHGFLRKFGLSRIKVREAAMRGEIPGLRKASW.

Belongs to the universal ribosomal protein uS14 family. In terms of assembly, part of the 30S ribosomal subunit. Contacts proteins S3 and S10.

Functionally, binds 16S rRNA, required for the assembly of 30S particles and may also be responsible for determining the conformation of the 16S rRNA at the A site. The sequence is that of Small ribosomal subunit protein uS14 from Proteus mirabilis (strain HI4320).